The sequence spans 777 residues: Protein argonaute (777 aa).

The interval 1–107 is N-terminal domain; that stretch reads MAPVQAADEM…ARLDDALEEA (107 aa). The tract at residues 108-182 is linker L1; sequence LPKYAAVKKR…TIGMRYDIEA (75 aa). Positions 183–243 are PAZ domain; that stretch reads SLRDLLEAGI…VNVNDAKLEG (61 aa). Residues 244 to 341 are linker L2; the sequence is SKENFTRCLS…DRTGAKSAEY (98 aa). Positions 342–509 are mid domain; the sequence is AWRGLSQFGP…SIATYAKLNG (168 aa). The Piwi domain maps to 445–757; it reads GIVVLFEDHA…IAELLGRLKS (313 aa). The PIWI domain stretch occupies residues 510 to 777; the sequence is TPWTVNHDKA…IKLKWSRWFL (268 aa). Leu-777 serves as a coordination point for Mg(2+).

This sequence belongs to the argonaute family. Long pAgo subfamily. The cofactor is Mg(2+).

In terms of biological role, a catalytically inactive argonaute protein. Binds 5'-phosphorylated RNA as the guide (gRNA) and short DNA as target DNA (tDNA); does not bind other nucleic acid combinations, does not bind tDNA alone. Has highest affinity for gRNA that begins with 5'-phospho-U and poor affinity for gRNA with 5'-OH. Upon expression in E.coli, plasmid sequences are found in RsAgo, its induction leads to plasmid degradation and suppression of genes encoded on foreign plasmids, suggesting it may also interfere with transcription. Does not interact with preformed gRNA:tDNA duplexes. Mismatches and nt bulges are tolerated in the ternary complex, however, they significantly reduce the affinity of RsAgo:gRNA for tDNA. Mismatched tDNA can cause dissociation of gRNA from RsAgo. In situ binds 2 populations of RNA (15-19 and 45 nucleotides, nt) and a population of ssDNA 22-24 nt in length. The small sense RNA is probably derived from mRNA degradation and strongly enriched for U in the first and U/C in the second positions. The small DNA is enriched for sequences complementary to the RNA, with 3 nt overhangs on both ends; another nuclease may trim the ends. The sequences are largely derived from exogenous plasmids or genome-encoded foreign elements such as prophages and transposons. Forms a ternary complex with gRNA and double-stranded tDNA only when the tDNA is open. The chain is Protein argonaute from Cereibacter sphaeroides (strain ATCC 17025 / ATH 2.4.3) (Rhodobacter sphaeroides).